The primary structure comprises 211 residues: MSEGGSKDSSGSECPVCYEKFRDLDGASRTLSCGHVFCHDCLVKYLLSTRVDGQVQRTIVCPICRYVTFLSKKSSRWPSMLDKSSQTLTVPVGLPSTPSPDRGGHTNPLVISHQVWRQSSSQGSQVPLDLLPSLPRESQIFIISRHGMPLGEQDSVLPRRSLAEISEASPAPSATRSFCCRSRALLLITLIAVVAVVAAILPWVLLVRKQA.

The RING-type zinc-finger motif lies at 14 to 65; sequence CPVCYEKFRDLDGASRTLSCGHVFCHDCLVKYLLSTRVDGQVQRTIVCPICR. A helical membrane pass occupies residues 187 to 207; the sequence is LITLIAVVAVVAAILPWVLLV.

Its subcellular location is the membrane. This chain is RING finger protein 222 (Rnf222), found in Mus musculus (Mouse).